A 320-amino-acid polypeptide reads, in one-letter code: tRNA U34 carboxymethyltransferase (320 aa).

Residues Lys89, Trp103, Lys108, Gly128, 150-152, 179-180, Met194, Tyr198, and Arg313 contribute to the carboxy-S-adenosyl-L-methionine site; these read DPT and IE.

The protein belongs to the class I-like SAM-binding methyltransferase superfamily. CmoB family. As to quaternary structure, homotetramer.

The catalysed reaction is carboxy-S-adenosyl-L-methionine + 5-hydroxyuridine(34) in tRNA = 5-carboxymethoxyuridine(34) in tRNA + S-adenosyl-L-homocysteine + H(+). In terms of biological role, catalyzes carboxymethyl transfer from carboxy-S-adenosyl-L-methionine (Cx-SAM) to 5-hydroxyuridine (ho5U) to form 5-carboxymethoxyuridine (cmo5U) at position 34 in tRNAs. The polypeptide is tRNA U34 carboxymethyltransferase (Actinobacillus pleuropneumoniae serotype 3 (strain JL03)).